Reading from the N-terminus, the 190-residue chain is CASP-like protein 1E1 (190 aa).

The interval 1–23 (MEHESKNKVDGMEMEKGKKESGS) is disordered. The Cytoplasmic segment spans residues 1–28 (MEHESKNKVDGMEMEKGKKESGSRKGLE). The helical transmembrane segment at 29-49 (LTMRVLALVLTMVAATVLGVA) threads the bilayer. Over 50–83 (KQTKVVPIKLIPTLPPLNVSTTAKASYLSAFVYN) the chain is Extracellular. An N-linked (GlcNAc...) asparagine glycan is attached at N67. The helical transmembrane segment at 84-104 (ISANAIACGYTAISIVIVMIS) threads the bilayer. Residues 105–111 (KGKRSKS) are Cytoplasmic-facing. The chain crosses the membrane as a helical span at residues 112-132 (LLMAVLIGDLMMVALLFSSTG). Topologically, residues 133–163 (AAGAIGLMGRHGNKHVMWKKVCGVFGKFCNQ) are extracellular. Residues 164–184 (AAVSVAITLIASVVFMLLVVL) form a helical membrane-spanning segment. Residues 185–190 (DALKLP) are Cytoplasmic-facing.

It belongs to the Casparian strip membrane proteins (CASP) family. In terms of assembly, homodimer and heterodimers.

It is found in the cell membrane. The polypeptide is CASP-like protein 1E1 (Arabidopsis thaliana (Mouse-ear cress)).